The following is a 322-amino-acid chain: Manganese-dependent ADP-ribose/CDP-alcohol diphosphatase (322 aa).

The Zn(2+) site is built by aspartate 13, glutamine 15, aspartate 60, asparagine 96, histidine 228, histidine 265, and histidine 267.

The protein belongs to the ADPRibase-Mn family. In terms of assembly, monomer. Requires Mg(2+) as cofactor.

The catalysed reaction is CDP-choline + H2O = phosphocholine + CMP + 2 H(+). It catalyses the reaction ADP-D-ribose + H2O = D-ribose 5-phosphate + AMP + 2 H(+). It carries out the reaction CDP-glycerol + H2O = sn-glycerol 3-phosphate + CMP + 2 H(+). Its function is as follows. Hydrolyzes ADP-ribose, IDP-ribose, CDP-glycerol, CDP-choline and CDP-ethanolamine, but not other non-reducing ADP-sugars or CDP-glucose. In Danio rerio (Zebrafish), this protein is Manganese-dependent ADP-ribose/CDP-alcohol diphosphatase (adprm).